The sequence spans 950 residues: MNTEAEQQLLHHARNGNAEEVRQLLETMARNEVIADINCKGRSKSNLGWTPLHLACYFGHRQVVQDLLKAGAEVNVLNDMGDTPLHRAAFTGRKELVMLLLEYNADTTIVNGSGQTAKEVTHAEEIRSMLEAVERTQQRKLEELLLAAAREGKTTELTALLNRPNPPDVNCSDQLGNTPLHCAAYRAHKQCALKLLRSGADPNLKNKNDQKPLDLAQGAEMKHILVGNKVIYKALKRYEGPLWKSSRFFGWRLFWVVLEHGVLSWYRKQPDAVHNIYRQGCKHLTQAVCTVKSTDSCLFFIKCFDDTIHGFRVPKNSLQQSREDWLEAIEEHSAYSTHYCSQDQLTDEEEEDTVSAADLKKSLEKAQSCQQRLDREISNFLKMIKECDMAKEMLPSFLQKVEVVSEASRETCVALTDCLNLFTKQEGVRNFKLEQEQEKNKILSEALETLATEHHELEQSLVKGSPPASILSEDEFYDALSDSESERSLSRLEAVTARSFEEEGEHLGSRKHRMSEEKDCGGGDALSNGIKKHRTSLPSPMFSRNDFSIWSILRKCIGMELSKITMPVIFNEPLSFLQRLTEYMEHTYLIHKASSLSDPVERMQCVAAFAVSAVASQWERTGKPFNPLLGETYELVRDDLGFRLISEQVSHHPPISAFHAEGLNNDFIFHGSIYPKLKFWGKSVEAEPKGTITLELLEHNEAYTWTNPTCCVHNIIVGKLWIEQYGNVEIINHKTGDKCVLNFKPCGLFGKELHKVEGYIQDKSKKKLCALYGKWTECLYSVDPATFDAYKKNDKKNTEEKKNSKQMSTSEELDEMPVPDSESVFIIPGSVLLWRIAPRPPNSAQMYNFTSFAMVLNEVDKDMESVIPKTDCRLRPDIRAMENGEIDQASEEKKRLEEKQRAARKNRSKSEEDWKTRWFHQGPNPYNGAQDWIYSGSYWDRNYFNLPDIY.

Residues methionine 1–arginine 237 form an interaction with RAB7A region. ANK repeat units lie at residues leucine 47–valine 76, methionine 80–isoleucine 109, and leucine 175–leucine 204. Residues leucine 235–alanine 334 enclose the PH domain. Residues asparagine 430–lysine 463 are a coiled coil. The FFAT signature appears at serine 469 to serine 485. At serine 499 the chain carries Phosphoserine. Basic and acidic residues predominate over residues glutamate 501 to glycine 521. Disordered regions lie at residues glutamate 501–serine 527, lysine 795–methionine 816, and methionine 881–aspartate 913. Positions aspartate 877 to aspartate 913 form a coiled coil. Positions serine 890–arginine 901 are enriched in basic and acidic residues.

This sequence belongs to the OSBP family. In terms of assembly, interacts (via FFAT motif) with VAPA and VAPB. Interacts with the GTP-bound form of RAB7A. Interacts with OAS1B. Interacts (via FFAT motif) with MOSPD2 (via MSP domain).

It is found in the late endosome. Its function is as follows. Binds phospholipids; exhibits strong binding to phosphatidic acid and weak binding to phosphatidylinositol 3-phosphate. Stabilizes GTP-bound RAB7A on late endosomes/lysosomes and alters functional properties of late endocytic compartments via its interaction with RAB7A. Binds 25-hydroxycholesterol and cholesterol. The protein is Oxysterol-binding protein-related protein 1 of Homo sapiens (Human).